The primary structure comprises 475 residues: MRDYTKQYINGEWVESNSNETIEVINPATEEVIGKVAKGNKADVDKAVEAADDVYLEFRHTSVKERQALLDKIVKEYENRKDDIVQAITDELGAPLSLSERVHYQMGLNHFVAARDALDNYEFEERRGDDLVVKEAIGVSGLITPWNFPTNQTSLKLAAAFAAGSPVVLKPSEETPFAAVILAEIFDKVGVPKGVFNLVNGDGAGVGNPLSEHPKVRMMSFTGSGPTGSKIMEKAAKDFKKVSLELGGKSPYIVLDDVDIKEAAKATTGKVVNNTGQVCTAGTRVLVPNKIKDAFLAELKEQFSQVRVGNPREDGTQVGPIISKKQFDQVQNYINKGIEEGAELFYGGPGKPEGLEKGYFARPTIFINVDNQMTIAQEEIFGPVMSVITYNDLDEAIQIANDTKYGLAGYVIGKDKETLHKVARSIEAGTVEINEAGRKPDLPFGGYKQSGLGREWGDYGIEEFLEVKSIAGYFK.

NAD(+)-binding positions include 146-147 (WN) and 223-224 (GS). Residue glutamate 245 is the Proton acceptor of the active site. An NAD(+)-binding site is contributed by leucine 246. Cysteine 279 acts as the Nucleophile in catalysis. Glutamate 379 lines the NAD(+) pocket.

This sequence belongs to the aldehyde dehydrogenase family.

The catalysed reaction is an aldehyde + NAD(+) + H2O = a carboxylate + NADH + 2 H(+). The polypeptide is Putative aldehyde dehydrogenase (Staphylococcus aureus (strain USA300)).